A 447-amino-acid polypeptide reads, in one-letter code: N-succinylarginine dihydrolase (447 aa).

Residues 19-28, asparagine 110, and 137-138 contribute to the substrate site; these read AGLSFGNEAS and HR. Glutamate 174 is a catalytic residue. Arginine 212 is a binding site for substrate. Histidine 248 is a catalytic residue. Positions 250 and 359 each coordinate substrate. Cysteine 365 serves as the catalytic Nucleophile.

The protein belongs to the succinylarginine dihydrolase family. In terms of assembly, homodimer.

The catalysed reaction is N(2)-succinyl-L-arginine + 2 H2O + 2 H(+) = N(2)-succinyl-L-ornithine + 2 NH4(+) + CO2. It functions in the pathway amino-acid degradation; L-arginine degradation via AST pathway; L-glutamate and succinate from L-arginine: step 2/5. Its function is as follows. Catalyzes the hydrolysis of N(2)-succinylarginine into N(2)-succinylornithine, ammonia and CO(2). This is N-succinylarginine dihydrolase from Escherichia coli (strain SMS-3-5 / SECEC).